A 1151-amino-acid chain; its full sequence is Nardilysin (1151 aa).

Positions 1-20 are cleaved as a signal peptide; sequence MLRRVTVAAVCATRRKLCEA. 2 disordered regions span residues 53 to 108 and 133 to 207; these read RNKA…KSPS and MEGK…KKTT. Residues serine 86, serine 94, and serine 96 each carry the phosphoserine modification. Over residues 141–198 the composition is skewed to acidic residues; sequence TDDEEEEEVEEEEEDDDEDSGAEIEDDDEEGFDDEDEFDDEHDDDLDTEDNELEELEE. Histidine 233 provides a ligand contact to Zn(2+). Catalysis depends on glutamate 236, which acts as the Proton acceptor. 2 residues coordinate Zn(2+): histidine 237 and glutamate 314.

This sequence belongs to the peptidase M16 family. In terms of assembly, interacts with BACE1 and NRG1. Requires Zn(2+) as cofactor. As to expression, primarily in adult heart, skeletal muscle, and testis and at much lower levels in other tissues.

It is found in the mitochondrion. It localises to the cell projection. Its subcellular location is the dendrite. It catalyses the reaction Hydrolysis of polypeptides, preferably at -Xaa-|-Arg-Lys-, and less commonly at -Arg-|-Arg-Xaa-, in which Xaa is not Arg or Lys.. Its function is as follows. Cleaves peptide substrates on the N-terminus of arginine residues in dibasic pairs. Is a critical activator of BACE1- and ADAM17-mediated pro-neuregulin ectodomain shedding, involved in the positive regulation of axonal maturation and myelination. Required for proper functioning of 2-oxoglutarate dehydrogenase (OGDH). This Homo sapiens (Human) protein is Nardilysin.